The sequence spans 132 residues: MYGIILKFTTTDVYSQNKSRRSCDTILPPETSGLFLPPEDIPFESPPSFSSFNPCTALVSFVFICVASSDGPKSNKSSKSPKVVKVFSIPAFVFVTSSLSSKSNSTSSLALLEISFFAMLSNSSICFPLTIF.

This is an uncharacterized protein from Saccharomyces cerevisiae (strain ATCC 204508 / S288c) (Baker's yeast).